The following is a 195-amino-acid chain: Aminoglycoside 2'-N-acetyltransferase (195 aa).

Residues 21–180 (VHTSDLDQET…VGLPAGMELD (160 aa)) enclose the N-acetyltransferase domain. Residues D45 and 92–93 (EA) each bind substrate. CoA contacts are provided by residues 94–96 (VAV) and 101–106 (RGQGLA). Residues S127 and 161-162 (ED) contribute to the substrate site.

The protein belongs to the AAC(2')-I acetyltransferase family. Homodimer.

Its function is as follows. Confers resistance to gentamicin, tobramycin, dibekacin, netilmicin, and 6'-N-ethylnetilmicin. The sequence is that of Aminoglycoside 2'-N-acetyltransferase (aac) from Mycolicibacterium fortuitum (Mycobacterium fortuitum).